Here is a 191-residue protein sequence, read N- to C-terminus: dCTP deaminase, dUMP-forming (191 aa).

DCTP is bound by residues 101–106, D119, 127–129, Q148, Y162, and Q174; these read KSSLGR and TLE. E129 (proton donor/acceptor) is an active-site residue.

This sequence belongs to the dCTP deaminase family. In terms of assembly, homotrimer.

The enzyme catalyses dCTP + 2 H2O = dUMP + NH4(+) + diphosphate. Its pathway is pyrimidine metabolism; dUMP biosynthesis; dUMP from dCTP: step 1/1. Bifunctional enzyme that catalyzes both the deamination of dCTP to dUTP and the hydrolysis of dUTP to dUMP without releasing the toxic dUTP intermediate. This Streptomyces coelicolor (strain ATCC BAA-471 / A3(2) / M145) protein is dCTP deaminase, dUMP-forming.